The primary structure comprises 544 residues: Serine/threonine-protein kinase PAK 3 (544 aa).

Positions 1 to 73 (MSDSLDNEEK…EKERPEISLP (73 aa)) are disordered. 2 positions are modified to phosphoserine: S2 and S4. The segment covering 18–32 (MNSNNRDSSALNHSS) has biased composition (polar residues). S50 carries the phosphoserine; by autocatalysis modification. The span at 63–73 (KEKERPEISLP) shows a compositional bias: basic and acidic residues. The GTPase-binding stretch occupies residues 65–108 (KERPEISLPSDFEHTIHVGFDAVTGEFTGIPEQWARLLQTSNIT). The autoregulatory region stretch occupies residues 65–135 (KERPEISLPS…YDSKETVNNQ (71 aa)). Residues 70–83 (ISLPSDFEHTIHVG) form the CRIB domain. The interval 84 to 267 (FDAVTGEFTG…IVSVGDPKKK (184 aa)) is linker. Residue S139 is modified to Phosphoserine; by autocatalysis. Disordered regions lie at residues 156-197 (SNTK…RPEH) and 213-248 (PAAPNKEATPPSAENANSSTLYRNTDRQRKKSKMTD). S171 bears the Phosphoserine mark. Acidic residues predominate over residues 171-186 (SEEEDEEEEEEEDDNE). Residues 224–235 (SAENANSSTLYR) are compositionally biased toward polar residues. Residues 268-519 (YTRFEKIGQG…AKELLQHPFL (252 aa)) enclose the Protein kinase domain. Residues 274-282 (IGQGASGTV) and K297 contribute to the ATP site. Catalysis depends on D387, which acts as the Proton acceptor. T421 is subject to Phosphothreonine; by autocatalysis.

The protein belongs to the protein kinase superfamily. STE Ser/Thr protein kinase family. STE20 subfamily. As to quaternary structure, interacts tightly with GTP-bound but not GDP-bound CDC42/p21 and RAC1. Shows highly specific binding to the SH3 domains of phospholipase C-gamma and of adapter protein NCK. Interacts with the C-terminal of APP. Interacts with ARHGEF6 and ARHGEF7. Interacts with GIT1 and GIT2. Mg(2+) serves as cofactor. Autophosphorylated when activated by CDC42/p21. Post-translationally, neddylated. Detected at high levels in the brain and at low levels in the testis.

The protein localises to the cytoplasm. The enzyme catalyses L-seryl-[protein] + ATP = O-phospho-L-seryl-[protein] + ADP + H(+). The catalysed reaction is L-threonyl-[protein] + ATP = O-phospho-L-threonyl-[protein] + ADP + H(+). With respect to regulation, activated by binding small G proteins. Binding of GTP-bound CDC42 or RAC1 to the autoregulatory region releases monomers from the autoinhibited dimer, enables phosphorylation of Thr-421 and allows the kinase domain to adopt an active structure. Functionally, serine/threonine protein kinase that plays a role in a variety of different signaling pathways including cytoskeleton regulation, cell migration, or cell cycle regulation. Plays a role in dendrite spine morphogenesis as well as synapse formation and plasticity. Acts as a downstream effector of the small GTPases CDC42 and RAC1. Activation by the binding of active CDC42 and RAC1 results in a conformational change and a subsequent autophosphorylation on several serine and/or threonine residues. Phosphorylates MAPK4 and MAPK6 and activates the downstream target MAPKAPK5, a regulator of F-actin polymerization and cell migration. Additionally, phosphorylates TNNI3/troponin I to modulate calcium sensitivity and relaxation kinetics of thin myofilaments. May also be involved in early neuronal development. In hippocampal neurons, necessary for the formation of dendritic spines and excitatory synapses; this function is dependent on kinase activity and may be exerted by the regulation of actomyosin contractility through the phosphorylation of myosin II regulatory light chain (MLC). This Rattus norvegicus (Rat) protein is Serine/threonine-protein kinase PAK 3 (Pak3).